A 248-amino-acid chain; its full sequence is MRKKVIFGNWKMNGTNKSLEDFLYQVDNKVNNSKITAGLAVPYVMLQTGIKLAKNVKIAAQNVHFELKGAYTGEISVSMLKEIGVEYVIIGHSERREMFFETDLDINKKAKILLENNMIPIICCGESLETKEQGKTIEFVNNQINLIYQNISKQDAIKTIIAYEPIWAIGTGKTANSLDAEEVCKKIRENLAKIYDNLTAEKITIQYGGSVKPSNIQEYLKMPNIDGALVGGASLLANDYLGLVNYNE.

A substrate-binding site is contributed by 9 to 11; it reads NWK. H92 acts as the Electrophile in catalysis. E164 (proton acceptor) is an active-site residue. Residues G170, S210, and 231 to 232 each bind substrate; that span reads GG.

It belongs to the triosephosphate isomerase family. Homodimer.

The protein localises to the cytoplasm. It catalyses the reaction D-glyceraldehyde 3-phosphate = dihydroxyacetone phosphate. It participates in carbohydrate biosynthesis; gluconeogenesis. It functions in the pathway carbohydrate degradation; glycolysis; D-glyceraldehyde 3-phosphate from glycerone phosphate: step 1/1. In terms of biological role, involved in the gluconeogenesis. Catalyzes stereospecifically the conversion of dihydroxyacetone phosphate (DHAP) to D-glyceraldehyde-3-phosphate (G3P). The chain is Triosephosphate isomerase from Mycoplasma capricolum subsp. capricolum (strain California kid / ATCC 27343 / NCTC 10154).